Consider the following 165-residue polypeptide: UPF0303 protein BceJ2315_15790 (165 aa).

This sequence belongs to the UPF0303 family.

The chain is UPF0303 protein BceJ2315_15790 from Burkholderia cenocepacia (strain ATCC BAA-245 / DSM 16553 / LMG 16656 / NCTC 13227 / J2315 / CF5610) (Burkholderia cepacia (strain J2315)).